A 209-amino-acid polypeptide reads, in one-letter code: Kynurenine formamidase (209 aa).

W19 provides a ligand contact to substrate. Zn(2+) contacts are provided by H49, H53, and D55. H59 (proton donor/acceptor) is an active-site residue. 2 residues coordinate Zn(2+): H160 and E172.

This sequence belongs to the Cyclase 1 superfamily. KynB family. As to quaternary structure, homodimer. Requires Zn(2+) as cofactor.

The enzyme catalyses N-formyl-L-kynurenine + H2O = L-kynurenine + formate + H(+). It participates in amino-acid degradation; L-tryptophan degradation via kynurenine pathway; L-kynurenine from L-tryptophan: step 2/2. Its function is as follows. Catalyzes the hydrolysis of N-formyl-L-kynurenine to L-kynurenine, the second step in the kynurenine pathway of tryptophan degradation. The protein is Kynurenine formamidase of Geobacillus thermodenitrificans (strain NG80-2).